The primary structure comprises 213 residues: Superoxide dismutase [Mn] (213 aa).

Mn(2+)-binding residues include histidine 27, histidine 82, aspartate 168, and histidine 172.

It belongs to the iron/manganese superoxide dismutase family. Homodimer.

The enzyme catalyses 2 superoxide + 2 H(+) = H2O2 + O2. Inhibited by hydrogen peroxide. Functionally, destroys superoxide anion radicals which are normally produced within the cells and which are toxic to biological systems. The chain is Superoxide dismutase [Mn] (sodA) from Haemophilus ducreyi (strain 35000HP / ATCC 700724).